Here is a 371-residue protein sequence, read N- to C-terminus: Glycosyltransferase 8 domain-containing protein 1 (371 aa).

At 1–7 the chain is on the cytoplasmic side; the sequence is MSFRKVN. A helical; Signal-anchor for type II membrane protein membrane pass occupies residues 8 to 28; the sequence is IIIWVLAVVLFLLVLHHNFLS. The Lumenal segment spans residues 29 to 371; it reads LSSLLKNDIS…RRHMDTSNIK (343 aa). The N-linked (GlcNAc...) asparagine glycan is linked to N257.

It belongs to the glycosyltransferase 8 family.

Its subcellular location is the membrane. The sequence is that of Glycosyltransferase 8 domain-containing protein 1 (Glt8d1) from Mus musculus (Mouse).